We begin with the raw amino-acid sequence, 586 residues long: Acyl-coenzyme A synthetase ACSM3, mitochondrial (586 aa).

Residues 1–27 (MLACVTMKMLRHAKCFQRLAIFGSVRA) constitute a mitochondrion transit peptide. An N6-succinyllysine mark is found at Lys-73 and Lys-106. Lys-157 carries the N6-acetyllysine modification. ATP is bound by residues 235 to 243 (TSGTSGYPK), 374 to 379 (EGYGQT), Asp-461, Arg-476, and Lys-572.

The protein belongs to the ATP-dependent AMP-binding enzyme family. Mg(2+) serves as cofactor. Requires Mn(2+) as cofactor.

Its subcellular location is the mitochondrion. The protein localises to the mitochondrion matrix. It catalyses the reaction a medium-chain fatty acid + ATP + CoA = a medium-chain fatty acyl-CoA + AMP + diphosphate. It carries out the reaction propanoate + ATP + CoA = propanoyl-CoA + AMP + diphosphate. The catalysed reaction is butanoate + ATP + CoA = butanoyl-CoA + AMP + diphosphate. The enzyme catalyses 2-methylpropanoate + ATP + CoA = 2-methylpropanoyl-CoA + AMP + diphosphate. It catalyses the reaction 2-methylbutanoate + ATP + CoA = 2-methylbutanoyl-CoA + AMP + diphosphate. It carries out the reaction octanoate + ATP + CoA = octanoyl-CoA + AMP + diphosphate. In terms of biological role, catalyzes the activation of fatty acids by CoA to produce an acyl-CoA, the first step in fatty acid metabolism. Capable of activating medium-chain fatty acids with a preference for isobutyrate among fatty acids with 2-6 carbon atoms. The sequence is that of Acyl-coenzyme A synthetase ACSM3, mitochondrial (ACSM3) from Pongo abelii (Sumatran orangutan).